The following is a 337-amino-acid chain: Cytoskeleton protein RodZ (337 aa).

The Cytoplasmic segment spans residues 1–111; that stretch reads MNTEATHDQN…LGKRRKKRDG (111 aa). Positions 19-71 constitute an HTH cro/C1-type domain; the sequence is LRNAREQLGLSQQAVAERLCLKVSTVRDIEEDKAPADLASTFLRGYIRSYARL. The H-T-H motif DNA-binding region spans 30 to 49; that stretch reads QQAVAERLCLKVSTVRDIEE. Residues 112–132 traverse the membrane as a helical; Signal-anchor for type II membrane protein segment; that stretch reads WLMTFTWLVLFVVIGLSGAWW. At 133–337 the chain is on the periplasmic side; that stretch reads WQDHKAQQEE…TLNAEQSPAQ (205 aa). Polar residues predominate over residues 145–167; that stretch reads TMADQSSAELSSNSEQGQSVPLN. The tract at residues 145–218 is disordered; that stretch reads TMADQSSAEL…AVVSPSQANV (74 aa). A compositionally biased stretch (low complexity) spans 168–207; it reads TSTTTDPATTSTPPASVDTTATNTQTPAVTAPAPAVDPQQ. Positions 208–218 are enriched in polar residues; that stretch reads NAVVSPSQANV.

This sequence belongs to the RodZ family.

It is found in the cell inner membrane. Functionally, cytoskeletal protein that is involved in cell-shape control through regulation of the length of the long axis. In Shigella flexneri serotype 5b (strain 8401), this protein is Cytoskeleton protein RodZ.